We begin with the raw amino-acid sequence, 209 residues long: Protocatechuate 3,4-dioxygenase alpha chain (209 aa).

Position 142 (arginine 142) interacts with 3,4-dihydroxybenzoate.

This sequence belongs to the intradiol ring-cleavage dioxygenase family. In terms of assembly, the enzyme is an oligomer of 12 copies of the alpha and beta chains. It depends on Fe(3+) as a cofactor.

It catalyses the reaction 3,4-dihydroxybenzoate + O2 = 3-carboxy-cis,cis-muconate + 2 H(+). Its pathway is aromatic compound metabolism; beta-ketoadipate pathway; 3-carboxy-cis,cis-muconate from 3,4-dihydroxybenzoate: step 1/1. Functionally, plays an essential role in the utilization of numerous aromatic and hydroaromatic compounds via the beta-ketoadipate pathway. This chain is Protocatechuate 3,4-dioxygenase alpha chain (pcaG), found in Acinetobacter baylyi (strain ATCC 33305 / BD413 / ADP1).